A 308-amino-acid polypeptide reads, in one-letter code: Methionine synthase (308 aa).

4 residues coordinate Zn(2+): histidine 201, cysteine 203, glutamate 224, and cysteine 285.

The protein belongs to the archaeal MetE family. The cofactor is Zn(2+).

It functions in the pathway amino-acid biosynthesis; L-methionine biosynthesis via de novo pathway. Functionally, catalyzes the transfer of a methyl group to L-homocysteine resulting in methionine formation. Can use methylcobalamin and methylcobinamide as methyl donors, but methylcobalamin is not considered to be the physiological substrate. This Methanothermobacter thermautotrophicus (strain ATCC 29096 / DSM 1053 / JCM 10044 / NBRC 100330 / Delta H) (Methanobacterium thermoautotrophicum) protein is Methionine synthase.